The primary structure comprises 601 residues: Alpha-terpineol synthase, chloroplastic (601 aa).

Residues 1 to 47 (MSTISIHHVGILRNPLHSKSKRASINKPWSLSLPRSSSASRLVEPCR) constitute a chloroplast transit peptide. Residues aspartate 357 and aspartate 361 each coordinate Mn(2+). The DDXXD motif signature appears at 357-361 (DDVYD). 2 homodimerization regions span residues 363–369 (YGTLDEL) and 435–471 (EAEW…ELSL). Aspartate 499 and glutamate 507 together coordinate Mn(2+).

This sequence belongs to the terpene synthase family. Homodimer. Mn(2+) serves as cofactor. Requires Mg(2+) as cofactor.

It is found in the plastid. It localises to the chloroplast. It carries out the reaction (2E)-geranyl diphosphate + H2O = (S)-alpha-terpineol + diphosphate. The enzyme catalyses (2E)-geranyl diphosphate + H2O = (R)-alpha-terpineol + diphosphate. Its pathway is secondary metabolite biosynthesis; terpenoid biosynthesis. Its function is as follows. Involved in the biosynthesis of phenolic monoterpenes natural products. Monoterpene synthase which catalyzes the conversion of geranyl diphosphate (GPP) to alpha-terpineol (isomer is not determined). The sequence is that of Alpha-terpineol synthase, chloroplastic from Thymus caespititius (Cretan thyme).